The chain runs to 297 residues: Putative lipid kinase MamU (297 aa).

Positions 43–131 (EGKDMGRMVR…MDVGRVNDRY (89 aa)) constitute a DAGKc domain. Position 68–74 (68–74 (GDGSLSR)) interacts with ATP. Glu-274 acts as the Proton acceptor in catalysis.

Belongs to the diacylglycerol/lipid kinase family.

The protein localises to the cytoplasm. In terms of biological role, might phosphorylate lipids. The polypeptide is Putative lipid kinase MamU (Magnetospirillum gryphiswaldense (strain DSM 6361 / JCM 21280 / NBRC 15271 / MSR-1)).